The following is a 455-amino-acid chain: Protein 60A (455 aa).

The first 36 residues, 1-36 (MSGLRNTSEAVAVLASLGLGMVLLMFVATTPPAVEA), serve as a signal peptide directing secretion. The propeptide occupies 37 to 335 (TQSGIYIDNG…SASHPRKRKK (299 aa)). Over residues 108–118 (GLSDQDEDDDY) the composition is skewed to acidic residues. The segment at 108-138 (GLSDQDEDDDYERGHRSRRSADLEEDEGEQQ) is disordered. Asn-238 and Asn-250 each carry an N-linked (GlcNAc...) asparagine glycan. Positions 316–345 (AHSSHHRSKRSASHPRKRKKSVSPNNVPLL) are disordered. Positions 318–336 (SSHHRSKRSASHPRKRKKS) are enriched in basic residues. 3 cysteine pairs are disulfide-bonded: Cys-354-Cys-420, Cys-383-Cys-452, and Cys-387-Cys-454. N-linked (GlcNAc...) asparagine glycosylation is present at Asn-396.

This sequence belongs to the TGF-beta family. In terms of assembly, homodimer; disulfide-linked. Interacts with nord and dpp. Expressed in cells of the developing foregut and hindgut during germ band retraction and later embryonic stages. Expressed in the wing disk, mainly in the posterior compartment in the pteropleural and medial regions extending into the progenitors of the scutellum. High levels are found within the posterior and anterior compartments of the wing pouch and low levels in the hinge region. In the eye/antennal disk, expression is highest anterior to the morphogenetic furrow and in the medial regions with lower levels of expression posterior to the morphogenetic furrow. Expressed throughout the posterior compartment of the leg imaginal disks and within the ventral anterior compartment.

Its subcellular location is the secreted. Its function is as follows. Required for the growth of imaginal tissues and for patterning of the adult wing. This is Protein 60A (gbb) from Drosophila melanogaster (Fruit fly).